The sequence spans 257 residues: Major prion protein (257 aa).

Residues 1–24 form the signal peptide; that stretch reads MVKSHIGSWLLVLFVATWSDIGFC. An interaction with ADGRG6 region spans residues 25-41; it reads KKRPKPGGGWNTGGSRY. The tract at residues 25-234 is interaction with GRB2, ERI3 and SYN1; that stretch reads KKRPKPGGGW…ESEAYYQRGA (210 aa). Residues 27 to 114 form a disordered region; sequence RPKPGGGWNT…KPSKPKTNMK (88 aa). Repeat copies occupy residues 54-62, 63-70, 71-78, 79-86, and 87-95. A 5 X 8 AA tandem repeats of P-H-G-G-G-W-G-Q region spans residues 54–95; the sequence is PQGGGGWGQPHGGGWGQPHGGGWGQPHGGGWGQPHGGGGWGQ. The span at 55–101 shows a compositional bias: gly residues; sequence QGGGGWGQPHGGGWGQPHGGGWGQPHGGGWGQPHGGGGWGQGGGSHG. Positions 64, 65, 66, 72, 73, 74, 80, 81, 82, 88, 90, and 91 each coordinate Cu(2+). Cysteine 183 and cysteine 218 form a disulfide bridge. N-linked (GlcNAc...) asparagine glycosylation is found at asparagine 185 and asparagine 201. A lipid anchor (GPI-anchor amidated alanine) is attached at alanine 234. Residues 235 to 257 constitute a propeptide, removed in mature form; the sequence is SAILFSPPPVILLISLLILLIVG.

The protein belongs to the prion family. Monomer and homodimer. Has a tendency to aggregate into amyloid fibrils containing a cross-beta spine, formed by a steric zipper of superposed beta-strands. Soluble oligomers may represent an intermediate stage on the path to fibril formation. Copper binding may promote oligomerization. Interacts with GRB2, APP, ERI3/PRNPIP and SYN1. Mislocalized cytosolically exposed PrP interacts with MGRN1; this interaction alters MGRN1 subcellular location and causes lysosomal enlargement. Interacts with APP. Interacts with KIAA1191. Interacts with ADGRG6.

The protein localises to the cell membrane. The protein resides in the golgi apparatus. Functionally, its primary physiological function is unclear. May play a role in neuronal development and synaptic plasticity. May be required for neuronal myelin sheath maintenance. May promote myelin homeostasis through acting as an agonist for ADGRG6 receptor. May play a role in iron uptake and iron homeostasis. Soluble oligomers are toxic to cultured neuroblastoma cells and induce apoptosis (in vitro). Association with GPC1 (via its heparan sulfate chains) targets PRNP to lipid rafts. Also provides Cu(2+) or Zn(2+) for the ascorbate-mediated GPC1 deaminase degradation of its heparan sulfate side chains. The chain is Major prion protein (PRNP) from Neovison vison (American mink).